Here is a 174-residue protein sequence, read N- to C-terminus: Peptidyl-prolyl cis-trans isomerase-like 1 (174 aa).

A PPIase cyclophilin-type domain is found at 5–159 (SPTYVTFDTS…EEIKIHRARL (155 aa)).

This sequence belongs to the cyclophilin-type PPIase family. PPIL1 subfamily.

The enzyme catalyses [protein]-peptidylproline (omega=180) = [protein]-peptidylproline (omega=0). Its function is as follows. PPIases accelerate the folding of proteins. It catalyzes the cis-trans isomerization of proline imidic peptide bonds in oligopeptides. The chain is Peptidyl-prolyl cis-trans isomerase-like 1 (CYP1) from Cryptococcus neoformans var. neoformans serotype D (strain B-3501A) (Filobasidiella neoformans).